Reading from the N-terminus, the 57-residue chain is Large ribosomal subunit protein bL32 (57 aa).

Over residues Met-1–Trp-20 the composition is skewed to basic residues. The interval Met-1–Lys-23 is disordered.

The protein belongs to the bacterial ribosomal protein bL32 family.

This is Large ribosomal subunit protein bL32 from Prochlorococcus marinus (strain SARG / CCMP1375 / SS120).